The primary structure comprises 396 residues: MLVLVVNCGSSSIKYKLMDMEQESVLLSGLSERIGIAGSRIKQENNKGEELVLEQDLPDHKAALETILKCITDAKYGAIKDTAEIKAVGHRVVHGGEKFNKSVVIDAELMKVLEEMSELAPLHNPPNIIGIKTCQELMPHAAQVAVFDTAFHSAMPKHAYTYAVPYEYYEKYKIRRYGFHGTSHKFVSHRAAEILGKPVEDLKIIVCHLGNGSSISAVGNGVSQDTSMGFTPLPGLPMGTRTGDMDPAIVPFLMEKEQLGVNEIGNVLNKKSGVLGVSGISSDFRDLEDAASKGNERAELALNMFAYGIIKYIGAYTAALGGLDAVVFTGGIGENSKTMRAKVLNGLAYTGLQIDEEKNNTRGKEVIVSKPGAPFVAMVVPTNEELMIARETKELV.

Mg(2+) is bound at residue N7. K14 is an ATP binding site. R91 is a substrate binding site. D148 (proton donor/acceptor) is an active-site residue. ATP contacts are provided by residues 208 to 212 (HLGNG), 283 to 285 (DFR), and 331 to 335 (GIGEN). E384 serves as a coordination point for Mg(2+).

Belongs to the acetokinase family. As to quaternary structure, homodimer. Requires Mg(2+) as cofactor. Mn(2+) is required as a cofactor.

It is found in the cytoplasm. The enzyme catalyses acetate + ATP = acetyl phosphate + ADP. Its pathway is metabolic intermediate biosynthesis; acetyl-CoA biosynthesis; acetyl-CoA from acetate: step 1/2. In terms of biological role, catalyzes the formation of acetyl phosphate from acetate and ATP. Can also catalyze the reverse reaction. This chain is Acetate kinase, found in Desulforamulus reducens (strain ATCC BAA-1160 / DSM 100696 / MI-1) (Desulfotomaculum reducens).